A 463-amino-acid polypeptide reads, in one-letter code: O-phospho-L-seryl-tRNA:Cys-tRNA synthase 2 (463 aa).

Pyridoxal 5'-phosphate-binding positions include 154 to 155 (AR), Asn-259, and 282 to 284 (SGH). Position 285 is an N6-(pyridoxal phosphate)lysine (Lys-285).

It belongs to the SepCysS family. Homodimer. Interacts with SepRS. The cofactor is pyridoxal 5'-phosphate.

It carries out the reaction O-phospho-L-seryl-tRNA(Cys) + hydrogen sulfide + H(+) = L-cysteinyl-tRNA(Cys) + phosphate. Functionally, converts O-phospho-L-seryl-tRNA(Cys) (Sep-tRNA(Cys)) to L-cysteinyl-tRNA(Cys) (Cys-tRNA(Cys)). This Methanocella arvoryzae (strain DSM 22066 / NBRC 105507 / MRE50) protein is O-phospho-L-seryl-tRNA:Cys-tRNA synthase 2.